A 196-amino-acid polypeptide reads, in one-letter code: Gastrula zinc finger protein XlCGF8.2DB (196 aa).

C2H2-type zinc fingers lie at residues 6–28 (FTCK…MTIH), 34–56 (FSCT…LTIH), 62–84 (FPCT…MKIH), 90–112 (FTCT…LKIH), 118–140 (FSCT…MKIH), 146–168 (FTCT…LKMH), and 174–196 (FTCT…MKIH).

It belongs to the krueppel C2H2-type zinc-finger protein family.

The protein resides in the nucleus. In terms of biological role, may be involved in transcriptional regulation. This chain is Gastrula zinc finger protein XlCGF8.2DB, found in Xenopus laevis (African clawed frog).